The sequence spans 425 residues: Enolase (425 aa).

Residue glutamine 162 coordinates (2R)-2-phosphoglycerate. Glutamate 204 functions as the Proton donor in the catalytic mechanism. The Mg(2+) site is built by aspartate 241, glutamate 282, and aspartate 309. Residues lysine 334, arginine 363, serine 364, and lysine 385 each contribute to the (2R)-2-phosphoglycerate site. The active-site Proton acceptor is lysine 334.

Belongs to the enolase family. Requires Mg(2+) as cofactor.

It is found in the cytoplasm. Its subcellular location is the secreted. The protein localises to the cell surface. The catalysed reaction is (2R)-2-phosphoglycerate = phosphoenolpyruvate + H2O. The protein operates within carbohydrate degradation; glycolysis; pyruvate from D-glyceraldehyde 3-phosphate: step 4/5. Its function is as follows. Catalyzes the reversible conversion of 2-phosphoglycerate (2-PG) into phosphoenolpyruvate (PEP). It is essential for the degradation of carbohydrates via glycolysis. This chain is Enolase, found in Corynebacterium diphtheriae (strain ATCC 700971 / NCTC 13129 / Biotype gravis).